The following is a 372-amino-acid chain: Aminomethyltransferase (372 aa).

It belongs to the GcvT family. The glycine cleavage system is composed of four proteins: P, T, L and H.

It catalyses the reaction N(6)-[(R)-S(8)-aminomethyldihydrolipoyl]-L-lysyl-[protein] + (6S)-5,6,7,8-tetrahydrofolate = N(6)-[(R)-dihydrolipoyl]-L-lysyl-[protein] + (6R)-5,10-methylene-5,6,7,8-tetrahydrofolate + NH4(+). The glycine cleavage system catalyzes the degradation of glycine. The sequence is that of Aminomethyltransferase from Streptomyces avermitilis (strain ATCC 31267 / DSM 46492 / JCM 5070 / NBRC 14893 / NCIMB 12804 / NRRL 8165 / MA-4680).